A 369-amino-acid polypeptide reads, in one-letter code: Chorismate synthase (369 aa).

Arg48 and Arg54 together coordinate NADP(+). Residues 125 to 127 (RSS), 238 to 239 (NA), Gly278, 293 to 297 (KPTSS), and Arg319 each bind FMN.

It belongs to the chorismate synthase family. Homotetramer. It depends on FMNH2 as a cofactor.

The enzyme catalyses 5-O-(1-carboxyvinyl)-3-phosphoshikimate = chorismate + phosphate. Its pathway is metabolic intermediate biosynthesis; chorismate biosynthesis; chorismate from D-erythrose 4-phosphate and phosphoenolpyruvate: step 7/7. In terms of biological role, catalyzes the anti-1,4-elimination of the C-3 phosphate and the C-6 proR hydrogen from 5-enolpyruvylshikimate-3-phosphate (EPSP) to yield chorismate, which is the branch point compound that serves as the starting substrate for the three terminal pathways of aromatic amino acid biosynthesis. This reaction introduces a second double bond into the aromatic ring system. The protein is Chorismate synthase of Nitrosococcus oceani (strain ATCC 19707 / BCRC 17464 / JCM 30415 / NCIMB 11848 / C-107).